A 288-amino-acid polypeptide reads, in one-letter code: 18S rRNA aminocarboxypropyltransferase (288 aa).

Positions 43, 91, 114, and 129 each coordinate S-adenosyl-L-methionine. The span at 209–221 (IWSAGNLNHKPTL) shows a compositional bias: polar residues. The segment at 209–267 (IWSAGNLNHKPTLNTSSTHSNSEESRSPLHEPSEASLAHDEHSIPTDDNEETLTNLQAN) is disordered. Residues 229-253 (NSEESRSPLHEPSEASLAHDEHSIP) show a composition bias toward basic and acidic residues.

This sequence belongs to the TDD superfamily. TSR3 family.

The protein localises to the cytoplasm. It is found in the nucleus. It catalyses the reaction an N(1)-methylpseudouridine in rRNA + S-adenosyl-L-methionine = N(1)-methyl-N(3)-[(3S)-3-amino-3-carboxypropyl]pseudouridine in rRNA + S-methyl-5'-thioadenosine + H(+). The enzyme catalyses N(1)-methylpseudouridine(1191) in yeast 18S rRNA + S-adenosyl-L-methionine = N(1)-methyl-N(3)-[(3S)-3-amino-3-carboxypropyl]pseudouridine(1191) in yeast 18S rRNA + S-methyl-5'-thioadenosine + H(+). Its function is as follows. Aminocarboxypropyltransferase that catalyzes the aminocarboxypropyl transfer on pseudouridine at position 1191 (Psi1191) in 18S rRNA. It constitutes the last step in biosynthesis of the hypermodified N1-methyl-N3-(3-amino-3-carboxypropyl) pseudouridine (m1acp3-Psi) conserved in eukaryotic 18S rRNA. Required for processing 35S pre-rRNA at site D. This is 18S rRNA aminocarboxypropyltransferase from Schizosaccharomyces pombe (strain 972 / ATCC 24843) (Fission yeast).